Consider the following 805-residue polypeptide: Phenylalanine--tRNA ligase beta subunit (805 aa).

Positions 39–154 (SEGLKKVVVG…DDATPGDPVF (116 aa)) constitute a tRNA-binding domain. The 76-residue stretch at 410-485 (VQPTTVTIDL…RLYGYDNLPA (76 aa)) folds into the B5 domain. Asp463, Asp469, Glu472, and Glu473 together coordinate Mg(2+). The 94-residue stretch at 712–805 (SKFPSITRDV…LTDELGAEIR (94 aa)) folds into the FDX-ACB domain.

It belongs to the phenylalanyl-tRNA synthetase beta subunit family. Type 1 subfamily. In terms of assembly, tetramer of two alpha and two beta subunits. The cofactor is Mg(2+).

It localises to the cytoplasm. It catalyses the reaction tRNA(Phe) + L-phenylalanine + ATP = L-phenylalanyl-tRNA(Phe) + AMP + diphosphate + H(+). The polypeptide is Phenylalanine--tRNA ligase beta subunit (Lactiplantibacillus plantarum (strain ATCC BAA-793 / NCIMB 8826 / WCFS1) (Lactobacillus plantarum)).